A 417-amino-acid chain; its full sequence is Probable uracil permease (417 aa).

At 1–13 (MTNQNPPVLLEQN) the chain is on the cytoplasmic side. Residues 14-37 (HAKQAFVGLQMLFVAFGALVLVPL) form a helical membrane-spanning segment. At 38–41 (ITGL) the chain is on the periplasmic side. A helical membrane pass occupies residues 42–61 (NANTALLTAGIGTLLFQLCT). At 62–64 (GRQ) the chain is on the cytoplasmic side. A discontinuously helical transmembrane segment spans residues 65–81 (VPIFLASSFAFIAPIQY). Phe73 lines the uracil pocket. Over 83-90 (VTTWGIAT) the chain is Periplasmic. The chain crosses the membrane as a helical span at residues 91-111 (TMGGLVFTGLVYFALSTLVKI). Over 112-123 (KGAGALQKVFPP) the chain is Cytoplasmic. A helical membrane pass occupies residues 124-145 (VVVGPVIIIIGMGLAPVAVDMA). At 146–154 (LGKNSTYQY) the chain is on the periplasmic side. Residues 155–170 (NDAVFVSMATLLTTLG) form a helical membrane-spanning segment. At 171–177 (VAVFAKG) the chain is on the cytoplasmic side. A helical transmembrane segment spans residues 178 to 198 (MMKLIPIMFGIVVGYILCLFL). Residues 199–223 (GLINFQPVIDAPWFSVPEITTPEFK) lie on the Periplasmic side of the membrane. A helical membrane pass occupies residues 224–247 (LEAILYLLPIAIAPAVEHVGGIMA). Glu240 lines the uracil pocket. Residues 248–260 (ISSVTGKDFLQKP) are Cytoplasmic-facing. The chain crosses the membrane as a helical span at residues 261-280 (GLHRTLLGDGIATSAASFLG). Residues 281–297 (GPPNTTYAEVTGAVMLT) traverse the membrane as a discontinuously helical segment. Glu289 serves as a coordination point for uracil. The Cytoplasmic portion of the chain corresponds to 298–300 (RNF). The chain crosses the membrane as a helical span at residues 301-318 (NPKIMTWAAVWAIAISFC). The Periplasmic portion of the chain corresponds to 319–331 (GKVGAFLSTIPTI). The helical transmembrane segment at 332–353 (VMGGIMMLVFGSIAVVGMSTLI) threads the bilayer. Topologically, residues 354 to 364 (RGKVDVTEARN) are cytoplasmic. The discontinuously helical intramembrane region spans 365 to 400 (LCIISVVMTFGIGGMFVNFGEVSLKGISLCAVVAIL). Residues 401–416 (LNLILPKAKNTPIEEN) lie on the Cytoplasmic side of the membrane.

The protein belongs to the nucleobase:cation symporter-2 (NCS2) (TC 2.A.40) family.

The protein resides in the cell inner membrane. The enzyme catalyses uracil(in) + H(+)(in) = uracil(out) + H(+)(out). Transport of uracil in the cell. In Pasteurella multocida (strain Pm70), this protein is Probable uracil permease (uraA).